Consider the following 355-residue polypeptide: RGG repeats nuclear RNA binding protein A (355 aa).

At A2 the chain carries N-acetylalanine. Positions 26 to 225 (KIDKSKKSGQ…VEEKEPEDKE (200 aa)) are disordered. Over residues 37-47 (SSLPAKSAPKL) the composition is skewed to low complexity. 2 stretches are compositionally biased toward gly residues: residues 67 to 81 (RGGGGRGGFNRGRGG) and 114 to 141 (GGGAPRGSFRGEGGGPGGGRRGGFSNEG). Positions 132-139 (GRRGGFSN) match the Nuclear localization signal motif. Over residues 143 to 168 (DGERPRRAFERRSGTGRGSDFKRDGS) the composition is skewed to basic and acidic residues. The Arginine-rich RNA-binding motif E-R-P-R-R-X-[F/Y]-[E/D]-R-R-S signature appears at 145 to 155 (ERPRRAFERRS). Positions 177–190 (GEEIAAETEAVAGV) are enriched in low complexity. 2 stretches are compositionally biased toward basic and acidic residues: residues 191–202 (ETEKDVGEKPAV) and 209–225 (ANKEDTVVEEKEPEDKE). The region spanning 234-289 (ILEEKKKALQSLTTSERKVDTKVFESMQQLSNKKSNDEIFIKLGSDKDKRKDDKEE) is the FF domain. S268 bears the Phosphoserine mark. Residues 277–292 (GSDKDKRKDDKEEKAK) are compositionally biased toward basic and acidic residues. The interval 277 to 355 (GSDKDKRKDD…AAQFPSLGGK (79 aa)) is disordered. The segment covering 323 to 333 (GRGGVSSGESG) has biased composition (gly residues). Phosphoserine is present on S351.

Belongs to the SERBP1-HABP4 family. Expressed in seedlings, leaves, roots, inflorescences, and siliques. Constitutively expressed in seedlings and roots.

Its subcellular location is the cytoplasm. The protein localises to the perinuclear region. The protein resides in the nucleus. Its function is as follows. Ribosome-binding protein that acts as a regulator of mRNA translation by promoting ribosome inactivation. Binds RNA. Regulates responses to abscisic acid (ABA). Promotes stomata closure in drought conditions. Involved in resistance to salt and drought stresses via the accumulation of Pro. The polypeptide is RGG repeats nuclear RNA binding protein A (Arabidopsis thaliana (Mouse-ear cress)).